The chain runs to 596 residues: Cell adhesion molecule CEACAM20 (596 aa).

A signal peptide spans 1–30 (MGPADSWGHHWMGILLSASLCTVWSPPAAA). Over 31-450 (QLTLNANPLD…SSLSSGAIAG (420 aa)) the chain is Extracellular. 4 Ig-like C2-type domains span residues 58 to 154 (PQIH…PIFL), 160 to 246 (PDPV…GTLK), 256 to 341 (PQVV…LELT), and 346 to 432 (PDQV…TSVL). Cys90 and Cys138 form a disulfide bridge. 2 N-linked (GlcNAc...) asparagine glycosylation sites follow: Asn96 and Asn105. A disulfide bridge links Cys276 with Cys324. Residues Asn280, Asn306, Asn317, Asn368, and Asn415 are each glycosylated (N-linked (GlcNAc...) asparagine). A disulfide bridge links Cys375 with Cys416. The helical transmembrane segment at 451–471 (IVIGILAVIAVASELGYFLCI) threads the bilayer. At 472 to 585 (RNARRPSRKT…SIYEELVNPE (114 aa)) the chain is on the cytoplasmic side. Disordered stretches follow at residues 477–510 (PSRK…LSPE) and 527–563 (QPPD…LMPP). A compositionally biased stretch (low complexity) spans 501-510 (EPSSESLSPE). Residues 553–562 (WKPPPKPLMP) are compositionally biased toward pro residues. Tyr578 and Tyr589 each carry phosphotyrosine.

The protein belongs to the immunoglobulin superfamily. CEA family. In terms of assembly, interacts (via extracellular domain) with PTPRH (via extracellular domain); the interaction dephosphorylates CEACAM20. Interacts (phosphorylated form) with SYK (via SH2 domains); the interaction further enhances CEACAM20 phosphorylation. Phosphorylated on tyrosine residues by SYK, SRC and FYN in vitro.

The protein resides in the cell projection. It is found in the microvillus membrane. The protein localises to the apical cell membrane. In terms of biological role, together with the tyrosine-protein kinase SYK, enhances production of the cytokine CXCL8/IL-8 via the NFKB pathway and may thus have a role in the intestinal immune response. The polypeptide is Cell adhesion molecule CEACAM20 (Homo sapiens (Human)).